Reading from the N-terminus, the 476-residue chain is Methylenetetrahydrofolate--tRNA-(uracil-5-)-methyltransferase TrmFO (476 aa).

13 to 18 is a binding site for FAD; sequence GGGLAG. Residues 425–446 are disordered; sequence PPLESPPTHGADGKKLRGPDKT. Positions 435 to 446 are enriched in basic and acidic residues; sequence ADGKKLRGPDKT.

This sequence belongs to the MnmG family. TrmFO subfamily. The cofactor is FAD.

It is found in the cytoplasm. The catalysed reaction is uridine(54) in tRNA + (6R)-5,10-methylene-5,6,7,8-tetrahydrofolate + NADH + H(+) = 5-methyluridine(54) in tRNA + (6S)-5,6,7,8-tetrahydrofolate + NAD(+). The enzyme catalyses uridine(54) in tRNA + (6R)-5,10-methylene-5,6,7,8-tetrahydrofolate + NADPH + H(+) = 5-methyluridine(54) in tRNA + (6S)-5,6,7,8-tetrahydrofolate + NADP(+). Catalyzes the folate-dependent formation of 5-methyl-uridine at position 54 (M-5-U54) in all tRNAs. The chain is Methylenetetrahydrofolate--tRNA-(uracil-5-)-methyltransferase TrmFO from Rhodopseudomonas palustris (strain BisB18).